The following is a 1107-amino-acid chain: Integrator complex subunit 6 homolog (1107 aa).

The VWFA domain occupies 2-195 (LITFVVDTSG…LPMEPAIAPM (194 aa)). 5 disordered regions span residues 454 to 515 (RIIN…SGNL), 542 to 572 (DNET…SSNI), 629 to 801 (TLRD…VSSP), 818 to 861 (QISS…IVNN), and 946 to 1034 (VVRP…TTPN). Composition is skewed to low complexity over residues 460–513 (QQQQ…SGSG) and 546–562 (SENS…STTG). Basic and acidic residues predominate over residues 629 to 639 (TLRDIDDDKKP). Over residues 693-801 (PSLPTLNSLS…PIPSTTVSSP (109 aa)) the composition is skewed to low complexity. Positions 846–857 (SPPPPPPPPPLP) are enriched in pro residues. Positions 956–975 (PLTIDTLTSSSSSSTIPTTT) are enriched in low complexity. Residues 976–996 (NGSLSTHDTPNTSPTLSSINY) show a composition bias toward polar residues. Residues 997–1034 (NNNNNNNNNNNNNNNNNNNNNNNNNNRKNSIITTTTPN) are compositionally biased toward low complexity. An MIF4G domain is found at 1041–1103 (IKFVHKEIRR…SLISKLIGYI (63 aa)).

This sequence belongs to the Integrator subunit 6 family. Component of the Integrator complex. The core complex associates with protein phosphatase 2A subunits, to form the Integrator-PP2A (INTAC) complex.

It is found in the nucleus. Its subcellular location is the chromosome. Its function is as follows. Component of the integrator complex, a multiprotein complex that terminates RNA polymerase II (Pol II) transcription in the promoter-proximal region of genes. The integrator complex provides a quality checkpoint during transcription elongation by driving premature transcription termination of transcripts that are unfavorably configured for transcriptional elongation: the complex terminates transcription by (1) catalyzing dephosphorylation of the C-terminal domain (CTD) of Pol II subunit polr2a, (2) degrading the exiting nascent RNA transcript via endonuclease activity and (3) promoting the release of Pol II from bound DNA. The integrator complex is also involved in terminating the synthesis of non-coding Pol II transcripts, such as enhancer RNAs (eRNAs), small nuclear RNAs (snRNAs), telomerase RNAs and long non-coding RNAs (lncRNAs). Within the integrator complex, INTS6 acts as a molecular adapter that promotes assembly of protein phosphatase 2A (PP2A) subunits to the integrator core complex, promoting recruitment of PP2A to transcription pause-release checkpoint. This is Integrator complex subunit 6 homolog (ints6) from Dictyostelium discoideum (Social amoeba).